The following is a 317-amino-acid chain: D-alanine--D-alanine ligase (317 aa).

The ATP-grasp domain occupies 111 to 308 (KRFWNGIGIP…YASLVEKIAQ (198 aa)). ATP is bound at residue 137 to 192 (EEQMSYPVIVKPSREGSTIGINKAMNRAELDDALIKALEYDSDILVEEFIDGPEFT). Mg(2+) contacts are provided by aspartate 262, glutamate 275, and asparagine 277.

This sequence belongs to the D-alanine--D-alanine ligase family. Mg(2+) is required as a cofactor. The cofactor is Mn(2+).

It localises to the cytoplasm. It catalyses the reaction 2 D-alanine + ATP = D-alanyl-D-alanine + ADP + phosphate + H(+). It functions in the pathway cell wall biogenesis; peptidoglycan biosynthesis. Functionally, cell wall formation. The sequence is that of D-alanine--D-alanine ligase from Marinomonas sp. (strain MWYL1).